We begin with the raw amino-acid sequence, 147 residues long: MASKLNEEAQSEFKEGFALYDGNKDGKLEAAELANTLRWLGQNPSQSEINEILREFGSNNQMGVDGLFNYLGRKVVDDFDEKEIIEAFQVFDKDGKGMIGASDLRHILTNLGERLPEEQVEEMLRQAVGSGDGAINYEPFVRNMLKK.

EF-hand domains are found at residues 8-43 (EAQS…LGQN), 79-114 (FDEK…LGER), and 115-147 (LPEE…MLKK). Ca(2+)-binding residues include Asp-21, Asn-23, Asp-25, Lys-27, and Glu-32.

As to quaternary structure, myosin I is a dimer of a heavy and a light chain. Inability to self-assemble into filaments. Interacts with myoD. Does not interact with myoB or myoC.

Its subcellular location is the cytoplasm. Functions as the light chain for myosin-D. Has low affinity for calcium. The protein is Myosin-ID light chain (mlcD) of Dictyostelium discoideum (Social amoeba).